The following is a 587-amino-acid chain: Inorganic phosphate transporter 2-1, chloroplastic (587 aa).

A chloroplast-targeting transit peptide spans 1-71 (MTLPYRFSSV…VCPLASFSSY (71 aa)). A disordered region spans residues 74–106 (SEGEEQHHADQPIQNPHESSTVSNESDGKGNAE). A compositionally biased stretch (polar residues) spans 85–98 (PIQNPHESSTVSNE). Transmembrane regions (helical) follow at residues 127–147 (AISI…KSLG), 154–174 (TKLL…NIGA), 195–215 (AVMT…THVT), 233–253 (MLLF…LQVA), 265–285 (CIVG…AVFW), 289–309 (AKVA…SFLV), 327–347 (AAAA…SAAL), 352–372 (IFPI…IVFD), 413–433 (LEIV…FMSF), 465–485 (IVIP…GLTM), 523–543 (LGLP…VGFA), and 559–579 (ASWL…TWIF).

Belongs to the inorganic phosphate transporter (PiT) (TC 2.A.20.2) family. In terms of tissue distribution, mostly expressed in young green tissues. Present in both auto- and heterotrophic tissues. Also expressed in root stele.

Its subcellular location is the plastid. It is found in the chloroplast inner membrane. In terms of biological role, low affinity H(+)/Pi chloroplastic cotransporter. Involved in inorganic phosphate (orthophosphate, Pi) uptake in green parts of plants in Pi-sufficient conditions. Required for Pi retranslocation during Pi deprivation. This Arabidopsis thaliana (Mouse-ear cress) protein is Inorganic phosphate transporter 2-1, chloroplastic (PHT2-1).